The sequence spans 387 residues: Sedoheptulose-1,7-bisphosphatase, chloroplastic (387 aa).

Cys109 and Cys114 are oxidised to a cystine. Residues Asp120, Glu149, Asp170, Leu172, and Asp173 each coordinate Mg(2+). Residues 173 to 176 (DGSS), Tyr284, and Lys314 each bind substrate. Glu320 contacts Mg(2+).

The protein belongs to the FBPase class 1 family. In terms of assembly, homodimer. Mg(2+) is required as a cofactor.

Its subcellular location is the plastid. The protein localises to the chloroplast. It catalyses the reaction D-sedoheptulose 1,7-bisphosphate + H2O = D-sedoheptulose 7-phosphate + phosphate. The protein operates within carbohydrate biosynthesis; Calvin cycle. The polypeptide is Sedoheptulose-1,7-bisphosphatase, chloroplastic (Spinacia oleracea (Spinach)).